A 529-amino-acid chain; its full sequence is Bifunctional purine biosynthesis protein PurH (529 aa).

In terms of domain architecture, MGS-like spans 1–148 (MTNRNVIKNV…KNYKNVLVVT (148 aa)).

This sequence belongs to the PurH family.

The catalysed reaction is (6R)-10-formyltetrahydrofolate + 5-amino-1-(5-phospho-beta-D-ribosyl)imidazole-4-carboxamide = 5-formamido-1-(5-phospho-D-ribosyl)imidazole-4-carboxamide + (6S)-5,6,7,8-tetrahydrofolate. It catalyses the reaction IMP + H2O = 5-formamido-1-(5-phospho-D-ribosyl)imidazole-4-carboxamide. Its pathway is purine metabolism; IMP biosynthesis via de novo pathway; 5-formamido-1-(5-phospho-D-ribosyl)imidazole-4-carboxamide from 5-amino-1-(5-phospho-D-ribosyl)imidazole-4-carboxamide (10-formyl THF route): step 1/1. It participates in purine metabolism; IMP biosynthesis via de novo pathway; IMP from 5-formamido-1-(5-phospho-D-ribosyl)imidazole-4-carboxamide: step 1/1. The sequence is that of Bifunctional purine biosynthesis protein PurH from Buchnera aphidicola subsp. Baizongia pistaciae (strain Bp).